The following is a 129-amino-acid chain: Prefoldin subunit 6 (129 aa).

Coiled coils occupy residues 6 to 26 (VRDL…IQKD) and 84 to 118 (IEYI…LQQR).

This sequence belongs to the prefoldin subunit beta family. In terms of assembly, heterohexamer of two PFD-alpha type and four PFD-beta type subunits forming prefoldin co-chaperone complex. Interacts with PFD2, PFD3, PFD4 and PFD5. Interacts with LSM8, a specific subunit of the LSM2-8 complex, which is a core component of the spliceosome. Binds to HSP90 to facilitate the formation of a larger complex made at least of HSP90, PFD6 and LSM8.

The protein resides in the cytoplasm. The protein localises to the nucleus. Its function is as follows. Binds specifically to cytosolic chaperonin (c-CPN) and transfers target proteins to it. Binds to nascent polypeptide chain and promotes folding in an environment in which there are many competing pathways for nonnative proteins. Together with other chaperonins, contribute to the regulation of gene expression by modulating the spliceosome function on pre-mRNA splicing post-transcriptionally by acting as a co-chaperone of Hsp90 to control levels of LSM8. Required for the biogenesis of tubulins and for subsequent microtubules (MTs) organization and dynamicity, but unable to associate with microtubules. Involved in the process leading to microtubules dissociation in response to gibberellic acid (GA) probably due to the DELLA proteins-mediated translocation of the prefoldin co-chaperone complex from the cytoplasm to the nucleus. Contributes to the GA-dependent regulation of PIN2 trafficking at the plasma membrane, thus influencing auxin flux. This is Prefoldin subunit 6 from Arabidopsis thaliana (Mouse-ear cress).